The following is a 174-amino-acid chain: Crossover junction endodeoxyribonuclease RuvC (174 aa).

Active-site residues include D8, E67, and D139. The Mg(2+) site is built by D8, E67, and D139.

Belongs to the RuvC family. Homodimer which binds Holliday junction (HJ) DNA. The HJ becomes 2-fold symmetrical on binding to RuvC with unstacked arms; it has a different conformation from HJ DNA in complex with RuvA. In the full resolvosome a probable DNA-RuvA(4)-RuvB(12)-RuvC(2) complex forms which resolves the HJ. The cofactor is Mg(2+).

Its subcellular location is the cytoplasm. It catalyses the reaction Endonucleolytic cleavage at a junction such as a reciprocal single-stranded crossover between two homologous DNA duplexes (Holliday junction).. The RuvA-RuvB-RuvC complex processes Holliday junction (HJ) DNA during genetic recombination and DNA repair. Endonuclease that resolves HJ intermediates. Cleaves cruciform DNA by making single-stranded nicks across the HJ at symmetrical positions within the homologous arms, yielding a 5'-phosphate and a 3'-hydroxyl group; requires a central core of homology in the junction. The consensus cleavage sequence is 5'-(A/T)TT(C/G)-3'. Cleavage occurs on the 3'-side of the TT dinucleotide at the point of strand exchange. HJ branch migration catalyzed by RuvA-RuvB allows RuvC to scan DNA until it finds its consensus sequence, where it cleaves and resolves the cruciform DNA. In Stutzerimonas stutzeri (strain A1501) (Pseudomonas stutzeri), this protein is Crossover junction endodeoxyribonuclease RuvC.